A 165-amino-acid chain; its full sequence is Histone H1-like protein HC2 (165 aa).

Composition is skewed to basic residues over residues 1–50 (MLGV…KTVA) and 59–80 (PVAK…KKTV). Residues 1–80 (MLGVQKKRST…VRKVAAKKTV (80 aa)) form a disordered region.

Belongs to the histone H1/H5 family. HCT subfamily.

Its function is as follows. Might have a role in establishing the nucleoid structure of elementary bodies. This Chlamydia trachomatis protein is Histone H1-like protein HC2 (hctB).